Here is a 453-residue protein sequence, read N- to C-terminus: Frizzled/smoothened-like sans CRD protein G (453 aa).

The first 24 residues, 1–24, serve as a signal peptide directing secretion; that stretch reads MIYILKNFIIILFFLLIILKRIES. Topologically, residues 25-89 are extracellular; sequence QSLPSLPSPT…PFFTLDEWNK (65 aa). Asparagine 49 and asparagine 67 each carry an N-linked (GlcNAc...) asparagine glycan. The chain crosses the membrane as a helical span at residues 90–110; it reads FLYMSLVMGTISFLCGLFLLI. Over 111–124 the chain is Cytoplasmic; it reads TYSPIVNKTHNRHT. A helical transmembrane segment spans residues 125 to 145; it reads IGVMCMSFGVCLAMCSDMWNF. Topologically, residues 146-170 are extracellular; the sequence is GSNFTDQKSICPSPGQYLTTSNSRC. N-linked (GlcNAc...) asparagine glycosylation is present at asparagine 148. The helical transmembrane segment at 171–191 threads the bilayer; it reads LGSGIVLQFGGVFGFLNWTLL. Over 192–209 the chain is Cytoplasmic; that stretch reads SFDLFMNIKGIITKNYDK. The helical transmembrane segment at 210 to 230 threads the bilayer; that stretch reads YYFVATFIIAIIFTFVPIVND. Residues 231–250 lie on the Extracellular side of the membrane; that stretch reads QYSMSYIGLGCWLGSAVYQL. The chain crosses the membrane as a helical span at residues 251-271; it reads IFFWILLSICLIVSSVFIILI. Over 272–296 the chain is Cytoplasmic; the sequence is LKEIYIIIKQSKQKTSLKGNIRPLL. Residues 297–317 traverse the membrane as a helical segment; the sequence is CITVTSFAFFYMFFYYISIVI. At 318-352 the chain is on the extracellular side; it reads EGDYYERILNEYTDCLMDPTKDVSECKFPRMSVAN. The chain crosses the membrane as a helical span at residues 353-373; sequence EFVFLLCLRLLGIGAFIFYGI. Topologically, residues 374-453 are cytoplasmic; that stretch reads NKEVKKIWLN…DDNFKPIIIK (80 aa).

This sequence belongs to the G-protein coupled receptor Fz/Smo family.

The protein resides in the membrane. The chain is Frizzled/smoothened-like sans CRD protein G (fscG) from Dictyostelium discoideum (Social amoeba).